The sequence spans 1245 residues: TAL effector protein Brg11 (1245 aa).

Disordered regions lie at residues 1 to 87 and 173 to 205; these read MRIG…LVPE and CPQA…PTFL. Pro residues predominate over residues 67 to 87; the sequence is PRRPLPVAPASAPPAPSLVPE. The Nuclear localization signal 1 motif lies at 185-191; the sequence is RSARARR. The stretch at 286-320 is one Cryptic repeat -1 repeat; it reads LTRAHIVDIARQRSGDLALQALLPVATALTAAPLR. The stretch at 321-354 is one Cryptic repeat 0 repeat; that stretch reads LSASQIATVAQYGERPAIQALYRLRRKLTRAPLH. 16 Core repeat repeats span residues 355 to 389, 390 to 424, 425 to 459, 460 to 494, 495 to 529, 530 to 564, 565 to 599, 600 to 634, 635 to 669, 670 to 704, 705 to 739, 740 to 774, 775 to 809, 810 to 844, 845 to 879, and 880 to 914; these read LTPQ…APYR, LSTE…APYV, LDTE…APYA, LSTE…APYA, LSTE…VPYA, LSTA…APYG, LSTA…APYA, LNTE…APYA, LSTE…APYG, LSTA…TPYD, and LNTA…APYA. The stretch at 915 to 948 is one Cryptic repeat +1 repeat; sequence LSTAQVVAIACISGQQALEAIEAHMPTLRQASHS. One copy of the Cryptic repeat +2 repeat lies at 949 to 982; that stretch reads LSPERVAAIACIGGRSAVEAVRQGLPVKAIRRIR. Short sequence motifs (nuclear localization signal) lie at residues 980 to 983, 1108 to 1111, and 1145 to 1148; these read RIRR, HRKR, and RRKR. The segment at 1096–1138 is disordered; the sequence is SPGMAGQSACSPHRKRPAETAIAPRSIRRSPNNAGQPSEPWPD. Residues 1237–1245 form an activation domain region; sequence DWLLQILET.

The protein belongs to the transcription activator-like effector (TALE) family. RipTAL/RTL subfamily.

The protein resides in the secreted. Its subcellular location is the host nucleus. Its function is as follows. Exported into plant cells, where it is targeted to the nucleus and probably acts as a transcription factor. Binds DNA in a sequence-specific manner. May contribute to plant pathogenicity. This Ralstonia nicotianae (strain ATCC BAA-1114 / GMI1000) (Ralstonia solanacearum) protein is TAL effector protein Brg11.